We begin with the raw amino-acid sequence, 150 residues long: Sec-independent protein translocase protein TatB (150 aa).

A helical transmembrane segment spans residues 1–21 (MFDLSWSEIALVGVVALIVIG). A compositionally biased stretch (basic and acidic residues) spans 77–86 (KIDQAIDPDG). The interval 77–150 (KIDQAIDPDG…RTDGSLPPQD (74 aa)) is disordered. Residues 109 to 135 (AAPPSLPPQAPAQPVPPATGAAPPSPS) are compositionally biased toward pro residues.

It belongs to the TatB family. In terms of assembly, the Tat system comprises two distinct complexes: a TatABC complex, containing multiple copies of TatA, TatB and TatC subunits, and a separate TatA complex, containing only TatA subunits. Substrates initially bind to the TatABC complex, which probably triggers association of the separate TatA complex to form the active translocon.

It localises to the cell inner membrane. Part of the twin-arginine translocation (Tat) system that transports large folded proteins containing a characteristic twin-arginine motif in their signal peptide across membranes. Together with TatC, TatB is part of a receptor directly interacting with Tat signal peptides. TatB may form an oligomeric binding site that transiently accommodates folded Tat precursor proteins before their translocation. In Rhodospirillum rubrum (strain ATCC 11170 / ATH 1.1.1 / DSM 467 / LMG 4362 / NCIMB 8255 / S1), this protein is Sec-independent protein translocase protein TatB.